An 859-amino-acid chain; its full sequence is Leucine--tRNA ligase (859 aa).

The 'HIGH' region signature appears at 42–52; sequence PYPSGRLHMGH. Residues 618–622 carry the 'KMSKS' region motif; sequence KMSKS. Lysine 621 provides a ligand contact to ATP.

This sequence belongs to the class-I aminoacyl-tRNA synthetase family.

It is found in the cytoplasm. The enzyme catalyses tRNA(Leu) + L-leucine + ATP = L-leucyl-tRNA(Leu) + AMP + diphosphate. The protein is Leucine--tRNA ligase of Shewanella baltica (strain OS195).